A 99-amino-acid chain; its full sequence is MEEPTSSTNENKMKSPCESNKRKVDKKKKNLHRASAPEQSLKETEKAKYPTLVFYCRKNKKRNSNQLENNQPTESSTDPIKEKGDLDISAGSPQDGGQN.

Over residues 1–10 (MEEPTSSTNE) the composition is skewed to polar residues. Residues 1 to 99 (MEEPTSSTNE…AGSPQDGGQN (99 aa)) form a disordered region. The span at 11–22 (NKMKSPCESNKR) shows a compositional bias: basic and acidic residues. The segment covering 23-32 (KVDKKKKNLH) has biased composition (basic residues). The span at 64–78 (SNQLENNQPTESSTD) shows a compositional bias: polar residues.

It belongs to the SPAN-X family.

In Homo sapiens (Human), this protein is Sperm protein associated with the nucleus on the X chromosome N4 (SPANXN4).